A 1432-amino-acid polypeptide reads, in one-letter code: Gag-Pol polyprotein (1432 aa).

Gly2 carries the N-myristoyl glycine; by host lipid modification. Positions 7-31 (ILSGGKLDDWEKIRLRPGGKKQYRI) are interaction with Gp41. Residues 8-43 (LSGGKLDDWEKIRLRPGGKKQYRIKHLVWASRELDR) are interaction with host CALM1. Positions 12 to 19 (KLDDWEKI) are interaction with host AP3D1. An interaction with membrane phosphatidylinositol 4,5-bisphosphate and RNA region spans residues 14-33 (DDWEKIRLRPGGKKQYRIKH). The short motif at 16-22 (WEKIRLR) is the Nuclear export signal element. Positions 26 to 32 (KKQYRIK) match the Nuclear localization signal motif. The interval 73 to 77 (EEIKS) is interaction with membrane phosphatidylinositol 4,5-bisphosphate. A Phosphotyrosine; by host modification is found at Tyr132. An interaction with human PPIA/CYPA and NUP153 region spans residues 189–227 (NTIGGHQAAMQMLKDTINEEAAEWDRVHPVHAGPVAPGQ). Residues 277-363 (YSPVSILDIR…GGPGHKARVL (87 aa)) form a dimerization/Multimerization of capsid protein p24 region. CCHC-type zinc fingers lie at residues 389–406 (VKCF…NCRA) and 410–427 (KGCW…DCTE). The interval 443 to 482 (EAREFSPEQTRANSPTSREPRVRRGDPLPETGAEGQGTVS) is disordered. A compositionally biased stretch (polar residues) spans 449-459 (PEQTRANSPTS). Residues 460–469 (REPRVRRGDP) show a composition bias toward basic and acidic residues. The segment at 486 to 490 (PQITL) is dimerization of protease. The 70-residue stretch at 505 to 574 (REALLDTGAD…TPVNIIGRNM (70 aa)) folds into the Peptidase A2 domain. The active-site For protease activity; shared with dimeric partner is Asp510. 2 dimerization of protease regions span residues 534-540 (GIGGFIK) and 573-585 (NMLT…LNFP). The Reverse transcriptase domain maps to 628-818 (EGKISRIGPE…PPFLWMGYEL (191 aa)). Residues Asp694, Asp769, and Asp770 each contribute to the Mg(2+) site. An RT 'primer grip' region spans residues 811–819 (FLWMGYELH). The Tryptophan repeat motif signature appears at 982-998 (WETWWTDYWQATWIPEW). The region spanning 1018–1141 (IMGAETFYVD…VDKLVSSGIR (124 aa)) is the RNase H type-1 domain. Residues Asp1027, Glu1062, Asp1082, and Asp1133 each coordinate Mg(2+). The segment at 1147–1188 (DGIDKAQEEHEKYHSNWRAMASDFNLPPVVAKEIVASCDKCQ) adopts an Integrase-type zinc-finger fold. Zn(2+) is bound by residues His1156, His1160, Cys1184, and Cys1187. The Integrase catalytic domain occupies 1198–1348 (VDCSPGIWQL…SAGERIIDII (151 aa)). Positions 1208, 1260, and 1296 each coordinate Mg(2+). A DNA-binding region (integrase-type) is located at residues 1367-1414 (FRVYYRDSRDPIWKGPAKLLWKGEGAVVIQDNSEIKVVPRRKAKIIRD).

Homotrimer; further assembles as hexamers of trimers. Interacts with gp41 (via C-terminus). Interacts with host CALM1; this interaction induces a conformational change in the Matrix protein, triggering exposure of the myristate group. Interacts with host AP3D1; this interaction allows the polyprotein trafficking to multivesicular bodies during virus assembly. Part of the pre-integration complex (PIC) which is composed of viral genome, matrix protein, Vpr and integrase. In terms of assembly, homodimer; the homodimer further multimerizes as homohexamers or homopentamers. Interacts with human PPIA/CYPA; This interaction stabilizes the capsid. Interacts with human NUP153. Interacts with host PDZD8; this interaction stabilizes the capsid. Interacts with monkey TRIM5; this interaction destabilizes the capsid. As to quaternary structure, homodimer, whose active site consists of two apposed aspartic acid residues. Heterodimer of p66 RT and p51 RT (RT p66/p51). Heterodimerization of RT is essential for DNA polymerase activity. The overall folding of the subdomains is similar in p66 RT and p51 RT but the spatial arrangements of the subdomains are dramatically different. In terms of assembly, homotetramer; may further associate as a homohexadecamer. Part of the pre-integration complex (PIC) which is composed of viral genome, matrix protein, Vpr and integrase. Interacts with human SMARCB1/INI1 and human PSIP1/LEDGF isoform 1. Interacts with human KPNA3; this interaction might play a role in nuclear import of the pre-integration complex. Interacts with human NUP153; this interaction might play a role in nuclear import of the pre-integration complex. It depends on Mg(2+) as a cofactor. Specific enzymatic cleavages by the viral protease yield mature proteins. The protease is released by autocatalytic cleavage. The polyprotein is cleaved during and after budding, this process is termed maturation. Proteolytic cleavage of p66 RT removes the RNase H domain to yield the p51 RT subunit. Nucleocapsid protein p7 might be further cleaved after virus entry. Post-translationally, tyrosine phosphorylated presumably in the virion by a host kinase. Phosphorylation is apparently not a major regulator of membrane association. In terms of processing, phosphorylated possibly by host MAPK1; this phosphorylation is necessary for Pin1-mediated virion uncoating. Methylated by host PRMT6, impairing its function by reducing RNA annealing and the initiation of reverse transcription.

The protein localises to the host cell membrane. It is found in the host endosome. It localises to the host multivesicular body. The protein resides in the virion membrane. Its subcellular location is the host nucleus. The protein localises to the host cytoplasm. It is found in the virion. The catalysed reaction is Specific for a P1 residue that is hydrophobic, and P1' variable, but often Pro.. The enzyme catalyses Endohydrolysis of RNA in RNA/DNA hybrids. Three different cleavage modes: 1. sequence-specific internal cleavage of RNA. Human immunodeficiency virus type 1 and Moloney murine leukemia virus enzymes prefer to cleave the RNA strand one nucleotide away from the RNA-DNA junction. 2. RNA 5'-end directed cleavage 13-19 nucleotides from the RNA end. 3. DNA 3'-end directed cleavage 15-20 nucleotides away from the primer terminus.. It carries out the reaction 3'-end directed exonucleolytic cleavage of viral RNA-DNA hybrid.. It catalyses the reaction DNA(n) + a 2'-deoxyribonucleoside 5'-triphosphate = DNA(n+1) + diphosphate. With respect to regulation, protease: The viral protease is inhibited by many synthetic protease inhibitors (PIs), such as amprenavir, atazanavir, indinavir, loprinavir, nelfinavir, ritonavir and saquinavir. Use of protease inhibitors in tritherapy regimens permit more ambitious therapeutic strategies. Reverse transcriptase/ribonuclease H: RT can be inhibited either by nucleoside RT inhibitors (NRTIs) or by non nucleoside RT inhibitors (NNRTIs). NRTIs act as chain terminators, whereas NNRTIs inhibit DNA polymerization by binding a small hydrophobic pocket near the RT active site and inducing an allosteric change in this region. Classical NRTIs are abacavir, adefovir (PMEA), didanosine (ddI), lamivudine (3TC), stavudine (d4T), tenofovir (PMPA), zalcitabine (ddC), and zidovudine (AZT). Classical NNRTIs are atevirdine (BHAP U-87201E), delavirdine, efavirenz (DMP-266), emivirine (I-EBU), and nevirapine (BI-RG-587). The tritherapies used as a basic effective treatment of AIDS associate two NRTIs and one NNRTI. Mediates, with Gag polyprotein, the essential events in virion assembly, including binding the plasma membrane, making the protein-protein interactions necessary to create spherical particles, recruiting the viral Env proteins, and packaging the genomic RNA via direct interactions with the RNA packaging sequence (Psi). Gag-Pol polyprotein may regulate its own translation, by the binding genomic RNA in the 5'-UTR. At low concentration, the polyprotein would promote translation, whereas at high concentration, the polyprotein would encapsidate genomic RNA and then shut off translation. Functionally, targets the polyprotein to the plasma membrane via a multipartite membrane-binding signal, that includes its myristoylated N-terminus. Matrix protein is part of the pre-integration complex. Implicated in the release from host cell mediated by Vpu. Binds to RNA. In terms of biological role, forms the conical core that encapsulates the genomic RNA-nucleocapsid complex in the virion. Most core are conical, with only 7% tubular. The core is constituted by capsid protein hexamer subunits. The core is disassembled soon after virion entry. Host restriction factors such as TRIM5-alpha or TRIMCyp bind retroviral capsids and cause premature capsid disassembly, leading to blocks in reverse transcription. Capsid restriction by TRIM5 is one of the factors which restricts HIV-1 to the human species. Host PIN1 apparently facilitates the virion uncoating. On the other hand, interactions with PDZD8 or CYPA stabilize the capsid. Its function is as follows. Encapsulates and protects viral dimeric unspliced genomic RNA (gRNA). Binds these RNAs through its zinc fingers. Acts as a nucleic acid chaperone which is involved in rearangement of nucleic acid secondary structure during gRNA retrotranscription. Also facilitates template switch leading to recombination. As part of the polyprotein, participates in gRNA dimerization, packaging, tRNA incorporation and virion assembly. Aspartyl protease that mediates proteolytic cleavages of Gag and Gag-Pol polyproteins during or shortly after the release of the virion from the plasma membrane. Cleavages take place as an ordered, step-wise cascade to yield mature proteins. This process is called maturation. Displays maximal activity during the budding process just prior to particle release from the cell. Also cleaves Nef and Vif, probably concomitantly with viral structural proteins on maturation of virus particles. Hydrolyzes host EIF4GI and PABP1 in order to shut off the capped cellular mRNA translation. The resulting inhibition of cellular protein synthesis serves to ensure maximal viral gene expression and to evade host immune response. Also mediates cleavage of host YTHDF3. Mediates cleavage of host CARD8, thereby activating the CARD8 inflammasome, leading to the clearance of latent HIV-1 in patient CD4(+) T-cells after viral reactivation; in contrast, HIV-1 can evade CARD8-sensing when its protease remains inactive in infected cells prior to viral budding. Functionally, multifunctional enzyme that converts the viral RNA genome into dsDNA in the cytoplasm, shortly after virus entry into the cell. This enzyme displays a DNA polymerase activity that can copy either DNA or RNA templates, and a ribonuclease H (RNase H) activity that cleaves the RNA strand of RNA-DNA heteroduplexes in a partially processive 3' to 5' endonucleasic mode. Conversion of viral genomic RNA into dsDNA requires many steps. A tRNA(3)-Lys binds to the primer-binding site (PBS) situated at the 5'-end of the viral RNA. RT uses the 3' end of the tRNA primer to perform a short round of RNA-dependent minus-strand DNA synthesis. The reading proceeds through the U5 region and ends after the repeated (R) region which is present at both ends of viral RNA. The portion of the RNA-DNA heteroduplex is digested by the RNase H, resulting in a ssDNA product attached to the tRNA primer. This ssDNA/tRNA hybridizes with the identical R region situated at the 3' end of viral RNA. This template exchange, known as minus-strand DNA strong stop transfer, can be either intra- or intermolecular. RT uses the 3' end of this newly synthesized short ssDNA to perform the RNA-dependent minus-strand DNA synthesis of the whole template. RNase H digests the RNA template except for two polypurine tracts (PPTs) situated at the 5'-end and near the center of the genome. It is not clear if both polymerase and RNase H activities are simultaneous. RNase H probably can proceed both in a polymerase-dependent (RNA cut into small fragments by the same RT performing DNA synthesis) and a polymerase-independent mode (cleavage of remaining RNA fragments by free RTs). Secondly, RT performs DNA-directed plus-strand DNA synthesis using the PPTs that have not been removed by RNase H as primers. PPTs and tRNA primers are then removed by RNase H. The 3' and 5' ssDNA PBS regions hybridize to form a circular dsDNA intermediate. Strand displacement synthesis by RT to the PBS and PPT ends produces a blunt ended, linear dsDNA copy of the viral genome that includes long terminal repeats (LTRs) at both ends. In terms of biological role, catalyzes viral DNA integration into the host chromosome, by performing a series of DNA cutting and joining reactions. This enzyme activity takes place after virion entry into a cell and reverse transcription of the RNA genome in dsDNA. The first step in the integration process is 3' processing. This step requires a complex comprising the viral genome, matrix protein, Vpr and integrase. This complex is called the pre-integration complex (PIC). The integrase protein removes 2 nucleotides from each 3' end of the viral DNA, leaving recessed CA OH's at the 3' ends. In the second step, the PIC enters cell nucleus. This process is mediated through integrase and Vpr proteins, and allows the virus to infect a non dividing cell. This ability to enter the nucleus is specific of lentiviruses, other retroviruses cannot and rely on cell division to access cell chromosomes. In the third step, termed strand transfer, the integrase protein joins the previously processed 3' ends to the 5' ends of strands of target cellular DNA at the site of integration. The 5'-ends are produced by integrase-catalyzed staggered cuts, 5 bp apart. A Y-shaped, gapped, recombination intermediate results, with the 5'-ends of the viral DNA strands and the 3' ends of target DNA strands remaining unjoined, flanking a gap of 5 bp. The last step is viral DNA integration into host chromosome. This involves host DNA repair synthesis in which the 5 bp gaps between the unjoined strands are filled in and then ligated. Since this process occurs at both cuts flanking the HIV genome, a 5 bp duplication of host DNA is produced at the ends of HIV-1 integration. Alternatively, Integrase may catalyze the excision of viral DNA just after strand transfer, this is termed disintegration. The protein is Gag-Pol polyprotein (gag-pol) of Homo sapiens (Human).